The chain runs to 340 residues: Deubiquitinase SseL (340 aa).

The active site involves His223. Cys285 acts as the Nucleophile in catalysis.

Belongs to the peptidase C79 family.

It localises to the secreted. The protein localises to the host cytoplasm. In terms of biological role, effector proteins function to alter host cell physiology and promote bacterial survival in host tissues. This protease targets the host cell ubiquitin pathway by acting as a deubiquitinase in infected host cells. The chain is Deubiquitinase SseL (sseL) from Salmonella choleraesuis (strain SC-B67).